The following is a 331-amino-acid chain: MINTSIPLVDLHRHLDGNVRVNTIWELGHQHGIALPADSLETLAPFVQIQGKETSLVAFLKKLDWMVAVLADLDAVKRVAYENVADAALSGLDYAELRFSPYYMAMNHKLPIEGVVEAVIDGVKAGLKDYQVKINLIGIMSRSFGQAACAQELEGLLAHKQHLVAMDLAGDELGFPGELFNEHFKRVRDAGLAITAHAGEAAGSQSMWQAIQELGATRIGHGVNAIHDPKLMDYLAKHRIGIESCPTSNLHTSTVSSYAEHPFRTFMDAGVLISLNTDDPGVSAIDIKHEYRIAKSELGLSYAELAQVQRNGVEMAFLSESERKALYAAKA.

Residues His-12 and His-14 each coordinate Zn(2+). Substrate contacts are provided by His-14, Asp-16, and Gly-170. His-197 is a Zn(2+) binding site. Glu-200 serves as the catalytic Proton donor. Zn(2+) is bound at residue Asp-278. A substrate-binding site is contributed by Asp-279.

Belongs to the metallo-dependent hydrolases superfamily. Adenosine and AMP deaminases family. Adenosine deaminase subfamily. The cofactor is Zn(2+).

It carries out the reaction adenosine + H2O + H(+) = inosine + NH4(+). It catalyses the reaction 2'-deoxyadenosine + H2O + H(+) = 2'-deoxyinosine + NH4(+). In terms of biological role, catalyzes the hydrolytic deamination of adenosine and 2-deoxyadenosine. This chain is Adenosine deaminase, found in Shewanella sp. (strain MR-7).